Consider the following 181-residue polypeptide: uncharacterized protein (181 aa).

This is an uncharacterized protein from Escherichia coli (strain K12).